Consider the following 509-residue polypeptide: Protein MAIN-LIKE 1 (509 aa).

The interval 477 to 509 (GYGKRRRRNEHTPTPNNGGGNDISSLLLQKEDS) is disordered. Positions 488 to 503 (TPTPNNGGGNDISSLL) are enriched in polar residues.

Expressed in root tips, the shoot apical meristem (SAM), leaves, mature flowers and embryos.

It localises to the nucleus. In terms of biological role, acts as an important factor for cell fate determination and maintenance throughout plant development. Required for the organization of the root apical meristem (RAM) and the shoot apical meristem (SAM). Required to maintain genome stability and cell division activity in meristematic cells. This chain is Protein MAIN-LIKE 1, found in Arabidopsis thaliana (Mouse-ear cress).